A 295-amino-acid chain; its full sequence is Ankyrin repeat and SOCS box protein 17 (295 aa).

The ANK repeat unit spans residues 146 to 176; it reads SGITPLFYVAQTRQSNIFKILLQYGILEREK. One can recognise an SOCS box domain in the interval 232-295; that stretch reads LGRHPIISNW…RLQNYLNLEI (64 aa).

This sequence belongs to the ankyrin SOCS box (ASB) family. As to expression, specifically expressed in testis. Not detected in other tissues tested.

It functions in the pathway protein modification; protein ubiquitination. Functionally, may be a substrate-recognition component of a SCF-like ECS (Elongin-Cullin-SOCS-box protein) E3 ubiquitin-protein ligase complex which mediates the ubiquitination and subsequent proteasomal degradation of target proteins. The chain is Ankyrin repeat and SOCS box protein 17 (ASB17) from Homo sapiens (Human).